We begin with the raw amino-acid sequence, 315 residues long: Three-prime repair exonuclease 1 (315 aa).

Mg(2+) contacts are provided by aspartate 18 and glutamate 20. 20–21 contacts substrate; the sequence is EA. Phosphoserine is present on serine 78. Tyrosine 129 is a substrate binding site. The residue at position 167 (serine 167) is a Phosphoserine. Residue histidine 195 is the Proton donor/acceptor of the active site. Aspartate 200 lines the Mg(2+) pocket. Substrate is bound at residue aspartate 200. Residues 236–315 form a necessary for endoplasmic reticulum localization region; it reads TTSTGTNPRP…YGLSLAMPGQ (80 aa). An interaction with UBQLN1 region spans residues 243 to 315; sequence PRPSAVTATV…YGLSLAMPGQ (73 aa). A disordered region spans residues 256–282; that stretch reads RASDTGPNLRGDRSPKPAPSPKMCPGA. Over residues 271-282 the composition is skewed to pro residues; sequence KPAPSPKMCPGA. Residues 282-315 are necessary for cytoplasmic retention; sequence APPGEGLLAPLGLLAFLTLAVAMLYGLSLAMPGQ.

It belongs to the exonuclease superfamily. TREX family. As to quaternary structure, homodimer. Interacts (via proline-rich region) with TCERG1/CA150 (via the second WW domain). Component of the SET complex, composed of at least ANP32A, APEX1, HMGB2, NME1, SET and TREX1. Within this complex, directly interacts with SET; this interaction does not result in TREX1 inhibition. Also interacts with NME1, but only following translocation to the nucleus. Directly interacts with UBQLN1 (via ubiquitin-like domain); the interaction may control TREX1 subcellular location. It depends on Mg(2+) as a cofactor. In terms of processing, ubiquitinated, but not targeted to proteasomal degradation. Ubiquitination may be important for interaction with UBQLN1.

Its subcellular location is the nucleus. It localises to the cytoplasm. The protein localises to the cytosol. The protein resides in the endoplasmic reticulum membrane. It catalyses the reaction Exonucleolytic cleavage in the 3'- to 5'-direction to yield nucleoside 5'-phosphates.. Its function is as follows. Major cellular 3'-to-5' DNA exonuclease which digests single-stranded DNA (ssDNA) and double-stranded DNA (dsDNA) with mismatched 3' termini. Prevents cell-intrinsic initiation of autoimmunity. Acts by metabolizing DNA fragments from endogenous retroelements, including L1, LTR and SINE elements. Plays a key role in degradation of DNA fragments at cytosolic micronuclei arising from genome instability: its association with the endoplasmic reticulum membrane directs TREX1 to ruptured micronuclei, leading to micronuclear DNA degradation. Micronuclear DNA degradation is required to limit CGAS activation and subsequent inflammation. Unless degraded, these DNA fragments accumulate in the cytosol and activate the cGAS-STING innate immune signaling, leading to the production of type I interferon. Prevents chronic ATM-dependent checkpoint activation, by processing ssDNA polynucleotide species arising from the processing of aberrant DNA replication intermediates. Inefficiently degrades oxidized DNA, such as that generated upon antimicrobial reactive oxygen production or upon absorption of UV light. During GZMA-mediated cell death, contributes to DNA damage in concert with NME1. NME1 nicks one strand of DNA and TREX1 removes bases from the free 3' end to enhance DNA damage and prevent DNA end reannealing and rapid repair. The chain is Three-prime repair exonuclease 1 from Bos taurus (Bovine).